Here is a 240-residue protein sequence, read N- to C-terminus: tRNA pseudouridine synthase A (240 aa).

Asp-50 serves as the catalytic Nucleophile. Residue Tyr-109 participates in substrate binding.

Belongs to the tRNA pseudouridine synthase TruA family. As to quaternary structure, homodimer.

The enzyme catalyses uridine(38/39/40) in tRNA = pseudouridine(38/39/40) in tRNA. Formation of pseudouridine at positions 38, 39 and 40 in the anticodon stem and loop of transfer RNAs. This chain is tRNA pseudouridine synthase A, found in Campylobacter jejuni (strain RM1221).